Reading from the N-terminus, the 429-residue chain is Adenylosuccinate synthetase (429 aa).

GTP-binding positions include 12-18 (GDEGKGK) and 40-42 (GHT). Catalysis depends on Asp-13, which acts as the Proton acceptor. 2 residues coordinate Mg(2+): Asp-13 and Gly-40. Residues 13 to 16 (DEGK), 38 to 41 (NAGH), Thr-128, Arg-142, Gln-223, and Arg-302 each bind IMP. His-41 (proton donor) is an active-site residue. 298-304 (TVTGRPR) provides a ligand contact to substrate. Residues Arg-304, 330-332 (LLD), and 412-414 (SVG) each bind GTP.

This sequence belongs to the adenylosuccinate synthetase family. As to quaternary structure, homodimer. Mg(2+) serves as cofactor.

Its subcellular location is the cytoplasm. The catalysed reaction is IMP + L-aspartate + GTP = N(6)-(1,2-dicarboxyethyl)-AMP + GDP + phosphate + 2 H(+). The protein operates within purine metabolism; AMP biosynthesis via de novo pathway; AMP from IMP: step 1/2. In terms of biological role, plays an important role in the de novo pathway of purine nucleotide biosynthesis. Catalyzes the first committed step in the biosynthesis of AMP from IMP. The sequence is that of Adenylosuccinate synthetase from Lactobacillus delbrueckii subsp. bulgaricus (strain ATCC 11842 / DSM 20081 / BCRC 10696 / JCM 1002 / NBRC 13953 / NCIMB 11778 / NCTC 12712 / WDCM 00102 / Lb 14).